The primary structure comprises 327 residues: Malate dehydrogenase (327 aa).

NAD(+) is bound at residue 11 to 17 (GAAGQIS). 2 residues coordinate substrate: arginine 92 and arginine 98. Residues asparagine 105, glutamine 112, and 129 to 131 (VGN) contribute to the NAD(+) site. Asparagine 131 and arginine 162 together coordinate substrate. Histidine 187 acts as the Proton acceptor in catalysis.

It belongs to the LDH/MDH superfamily. MDH type 2 family.

The enzyme catalyses (S)-malate + NAD(+) = oxaloacetate + NADH + H(+). Catalyzes the reversible oxidation of malate to oxaloacetate. This chain is Malate dehydrogenase, found in Teredinibacter turnerae (strain ATCC 39867 / T7901).